A 642-amino-acid polypeptide reads, in one-letter code: Probable Xaa-Pro aminopeptidase P (642 aa).

4 residues coordinate Mn(2+): D439, D450, E548, and E562.

It belongs to the peptidase M24B family. Requires Mn(2+) as cofactor.

The enzyme catalyses Release of any N-terminal amino acid, including proline, that is linked to proline, even from a dipeptide or tripeptide.. Catalyzes the removal of a penultimate prolyl residue from the N-termini of peptides. The sequence is that of Probable Xaa-Pro aminopeptidase P (AMPP) from Laccaria bicolor (strain S238N-H82 / ATCC MYA-4686) (Bicoloured deceiver).